The sequence spans 214 residues: Pyridoxine/pyridoxamine 5'-phosphate oxidase (214 aa).

Substrate is bound by residues 11 to 14 (RREY) and K68. FMN is bound by residues 63 to 68 (RLVLLK), 78 to 79 (FT), R84, K85, and Q107. Residues Y125 and R129 each coordinate substrate. Residues 142 to 143 (QS) and W187 contribute to the FMN site. 193 to 195 (RLH) is a binding site for substrate. R197 contributes to the FMN binding site.

It belongs to the pyridoxamine 5'-phosphate oxidase family. Homodimer. The cofactor is FMN.

It carries out the reaction pyridoxamine 5'-phosphate + O2 + H2O = pyridoxal 5'-phosphate + H2O2 + NH4(+). The catalysed reaction is pyridoxine 5'-phosphate + O2 = pyridoxal 5'-phosphate + H2O2. The protein operates within cofactor metabolism; pyridoxal 5'-phosphate salvage; pyridoxal 5'-phosphate from pyridoxamine 5'-phosphate: step 1/1. It functions in the pathway cofactor metabolism; pyridoxal 5'-phosphate salvage; pyridoxal 5'-phosphate from pyridoxine 5'-phosphate: step 1/1. In terms of biological role, catalyzes the oxidation of either pyridoxine 5'-phosphate (PNP) or pyridoxamine 5'-phosphate (PMP) into pyridoxal 5'-phosphate (PLP). The polypeptide is Pyridoxine/pyridoxamine 5'-phosphate oxidase (Blochmanniella floridana).